A 1115-amino-acid polypeptide reads, in one-letter code: Scavenger receptor cysteine-rich type 1 protein M130 (1115 aa).

The N-terminal stretch at 1–46 is a signal peptide; that stretch reads MDKLRMVLHENSGSADFRRCSAHLSSFTFAVVAVLSACLVTSSLGG. Topologically, residues 47 to 1044 are extracellular; it reads KDKELRLTGG…ESLHATGRSS (998 aa). SRCR domains lie at 51 to 151, 158 to 258, 265 to 365, 372 to 472, 477 to 577, 582 to 682, 718 to 818, 823 to 925, and 928 to 1028; these read LRLT…VTCS, MGLV…VICL, LRVV…VTCS, LRLK…ITCS, PRLV…VVCS, IRLV…VICS, LRLV…VICS, LRLI…ITCA, and IRLQ…VTCS. Disulfide bonds link C76–C140, C89–C150, C120–C130, C183–C247, C196–C257, C227–C237, C290–C354, C303–C364, C334–C344, C397–C461, C410–C471, C441–C451, C502–C566, C515–C576, C546–C556, C607–C671, C620–C681, C651–C661, C743–C807, C756–C817, C787–C797, C863–C924, and C894–C904. N105 is a glycosylation site (N-linked (GlcNAc...) asparagine). N139 carries an N-linked (GlcNAc...) asparagine glycan. An N-linked (GlcNAc...) asparagine glycan is attached at N936. 3 disulfides stabilise this stretch: C953–C1017, C966–C1027, and C997–C1007. The helical transmembrane segment at 1045–1065 threads the bilayer; the sequence is FVALAIFGVILLACLIAFLIW. Residues 1066 to 1115 lie on the Cytoplasmic side of the membrane; it reads TQKRRQRQRLSVFSGGENSVHQIQYREMNSCLKADETDMLNPSGDHSEVQ. Residues 1090 to 1093 carry the Internalization signal motif; sequence YREM.

In terms of assembly, interacts with CSNK2B. In terms of processing, a soluble form (sCD163) is produced by proteolytic shedding which can be induced by lipopolysaccharide, phorbol ester and Fc region of immunoglobulin gamma. This cleavage is dependent on protein kinase C and tyrosine kinases and can be blocked by protease inhibitors. The shedding is inhibited by the tissue inhibitor of metalloproteinase TIMP3, and thus probably induced by membrane-bound metalloproteinases ADAMs. Post-translationally, phosphorylated. As to expression, expressed in monocytes and macrophages. Detected only in one population of monocytes (CD163+) which is in advanced maturation stage.

The protein resides in the secreted. The protein localises to the cell membrane. Involved in clearance and endocytosis of hemoglobin/haptoglobin complexes by macrophages and may thereby protect tissues from free hemoglobin-mediated oxidative damage. May play a role in the uptake and recycling of iron, via endocytosis of hemoglobin/haptoglobin and subsequent breakdown of heme. Binds hemoglobin/haptoglobin complexes in a calcium-dependent and pH-dependent manner. Induces a cascade of intracellular signals that involves tyrosine kinase-dependent calcium mobilization, inositol triphosphate production and secretion of IL6 and CSF1. May play a role in the process of infection of porcine monocytes/macrophages by African swine fever virus (ASFV). In case of porcine reproductive and respiratory syndrome virus (PRRSV), serves mediates virion attachment and plays a role in viral entry. Functionally, after shedding, the soluble form (sCD163) may play an anti-inflammatory role. The chain is Scavenger receptor cysteine-rich type 1 protein M130 (CD163) from Sus scrofa (Pig).